A 670-amino-acid chain; its full sequence is ATP synthase subunit alpha 2 (670 aa).

180–187 is a binding site for ATP; the sequence is GDRATGKT. Residues 525–670 are disordered; sequence MPAEDAAGDI…DAEAEARHKR (146 aa). Residues 543–588 are compositionally biased toward basic and acidic residues; the sequence is ARGDADRDADHGANREVSREVSPEASREVSREVSREVSHEADRDAA. Low complexity predominate over residues 589–599; that stretch reads ADAARVAGRAP. Basic and acidic residues predominate over residues 621–639; sequence ADGDRASASRPPPDARGDA. The segment covering 650–661 has biased composition (low complexity); sequence ADANVNADANVD.

This sequence belongs to the ATPase alpha/beta chains family. In terms of assembly, F-type ATPases have 2 components, CF(1) - the catalytic core - and CF(0) - the membrane proton channel. CF(1) has five subunits: alpha(3), beta(3), gamma(1), delta(1), epsilon(1). CF(0) has three main subunits: a(1), b(2) and c(9-12). The alpha and beta chains form an alternating ring which encloses part of the gamma chain. CF(1) is attached to CF(0) by a central stalk formed by the gamma and epsilon chains, while a peripheral stalk is formed by the delta and b chains.

It is found in the cell inner membrane. It carries out the reaction ATP + H2O + 4 H(+)(in) = ADP + phosphate + 5 H(+)(out). In terms of biological role, produces ATP from ADP in the presence of a proton gradient across the membrane. The alpha chain is a regulatory subunit. This chain is ATP synthase subunit alpha 2, found in Burkholderia mallei (strain NCTC 10247).